The following is a 417-amino-acid chain: Lipoyl synthase, mitochondrial (417 aa).

The N-terminal 30 residues, M1–F30, are a transit peptide targeting the mitochondrion. Residues S23–G62 are disordered. Composition is skewed to polar residues over residues F30–V41 and P51–A61. [4Fe-4S] cluster contacts are provided by C132, C137, C143, C163, C167, C170, and S378. The Radical SAM core domain occupies G146–L367.

The protein belongs to the radical SAM superfamily. Lipoyl synthase family. The cofactor is [4Fe-4S] cluster.

It is found in the mitochondrion. It carries out the reaction [[Fe-S] cluster scaffold protein carrying a second [4Fe-4S](2+) cluster] + N(6)-octanoyl-L-lysyl-[protein] + 2 oxidized [2Fe-2S]-[ferredoxin] + 2 S-adenosyl-L-methionine + 4 H(+) = [[Fe-S] cluster scaffold protein] + N(6)-[(R)-dihydrolipoyl]-L-lysyl-[protein] + 4 Fe(3+) + 2 hydrogen sulfide + 2 5'-deoxyadenosine + 2 L-methionine + 2 reduced [2Fe-2S]-[ferredoxin]. It functions in the pathway protein modification; protein lipoylation via endogenous pathway; protein N(6)-(lipoyl)lysine from octanoyl-[acyl-carrier-protein]: step 2/2. Functionally, catalyzes the radical-mediated insertion of two sulfur atoms into the C-6 and C-8 positions of the octanoyl moiety bound to the lipoyl domains of lipoate-dependent enzymes, thereby converting the octanoylated domains into lipoylated derivatives. This Pyrenophora tritici-repentis (strain Pt-1C-BFP) (Wheat tan spot fungus) protein is Lipoyl synthase, mitochondrial.